The sequence spans 128 residues: Cyclin-dependent protein kinase inhibitor SMR1 (128 aa).

Residues 17-74 (PIKIRSKTSKTKKDEGDDDEDDLRCSTPTSQEHKIPAVVDSPPPPPRKPRPPPSAPSA) are disordered. Residues 57 to 71 (SPPPPPRKPRPPPSA) show a composition bias toward pro residues.

Interacts with CDKB1-1. Interacts with CPR5. As to expression, expressed in roots, leaves, stems, siliques and flowers. Expressed in the root elongation zone.

Its subcellular location is the nucleus. Functionally, probable cyclin-dependent protein kinase (CDK) inhibitor that functions as a repressor of mitosis in the endoreduplication cell cycle. Cooperates with SIM and SMR2 to promote endoreplication during leaf development. Specifically regulates endoreduplication in epidermal pavement cells to produce the cell size pattern. Is necessary for giant cell formation. Positive regulator of effector-triggered immunity (ETI). The protein is Cyclin-dependent protein kinase inhibitor SMR1 of Arabidopsis thaliana (Mouse-ear cress).